We begin with the raw amino-acid sequence, 135 residues long: Protein PsiE homolog (135 aa).

Transmembrane regions (helical) follow at residues 14–34, 54–74, 82–102, and 107–127; these read LQTI…IFLV, YQLI…ALIV, HFPL…LIIV, and PSDT…LYLA.

The protein belongs to the PsiE family.

It localises to the cell inner membrane. The chain is Protein PsiE homolog from Pectobacterium carotovorum subsp. carotovorum (strain PC1).